We begin with the raw amino-acid sequence, 528 residues long: Probable serine/threonine-protein kinase 380R (528 aa).

Residues 70 to 96 (VKIPKSKSPPKVKSPKRKKSPVRRRVS) are disordered. A compositionally biased stretch (basic residues) spans 73 to 95 (PKSKSPPKVKSPKRKKSPVRRRV). Positions 156–507 (FTNVKAVGKG…LANVLIHKIF (352 aa)) constitute a Protein kinase domain. Residues 162–170 (VGKGSFGTV) and K187 contribute to the ATP site. D302 (proton acceptor) is an active-site residue.

It belongs to the protein kinase superfamily. Ser/Thr protein kinase family.

The enzyme catalyses L-seryl-[protein] + ATP = O-phospho-L-seryl-[protein] + ADP + H(+). It catalyses the reaction L-threonyl-[protein] + ATP = O-phospho-L-threonyl-[protein] + ADP + H(+). In Invertebrate iridescent virus 6 (IIV-6), this protein is Probable serine/threonine-protein kinase 380R.